The primary structure comprises 91 residues: Cell division topological specificity factor (91 aa).

The protein belongs to the MinE family.

Its function is as follows. Prevents the cell division inhibition by proteins MinC and MinD at internal division sites while permitting inhibition at polar sites. This ensures cell division at the proper site by restricting the formation of a division septum at the midpoint of the long axis of the cell. This is Cell division topological specificity factor from Bradyrhizobium diazoefficiens (strain JCM 10833 / BCRC 13528 / IAM 13628 / NBRC 14792 / USDA 110).